The primary structure comprises 223 residues: RNA-free ribonuclease P (223 aa).

Belongs to the HARP family.

The catalysed reaction is Endonucleolytic cleavage of RNA, removing 5'-extranucleotides from tRNA precursor.. RNA-free RNase P that catalyzes the removal of the 5'-leader sequence from pre-tRNA to produce the mature 5'-terminus. The chain is RNA-free ribonuclease P from Methanococcus maripaludis (strain C7 / ATCC BAA-1331).